A 349-amino-acid chain; its full sequence is Putative transport protein jhp_0514 (349 aa).

Transmembrane regions (helical) follow at residues 6-26 (FFWI…QDFL), 27-47 (MDAL…VFLN), 56-76 (SFLC…FIVY), 143-163 (LKLV…FYYG), 195-215 (VLLT…TMII), 224-244 (LGIL…LIWI), 258-278 (EAIF…DSVI), and 300-320 (ILIF…GIIV).

The protein belongs to the autoinducer-2 exporter (AI-2E) (TC 2.A.86) family.

The protein localises to the cell membrane. The protein is Putative transport protein jhp_0514 of Helicobacter pylori (strain J99 / ATCC 700824) (Campylobacter pylori J99).